A 195-amino-acid chain; its full sequence is Morphogenetic protein (195 aa).

Functionally, assembly factor active in membrane morphogenesis. The sequence is that of Morphogenetic protein (P12) from Pseudomonas phage phi6 (Bacteriophage phi-6).